The primary structure comprises 467 residues: tRNA-2-methylthio-N(6)-dimethylallyladenosine synthase (467 aa).

The region spanning 5-125 (RKLHIKSYGC…LPQLLAQASR (121 aa)) is the MTTase N-terminal domain. Positions 14, 50, 88, 166, 170, and 173 each coordinate [4Fe-4S] cluster. Residues 152–384 (RARGVSAFVT…QSLIDSQQAA (233 aa)) enclose the Radical SAM core domain. The TRAM domain occupies 387-449 (KAAIGSVVDV…RYSLLGELVA (63 aa)).

This sequence belongs to the methylthiotransferase family. MiaB subfamily. In terms of assembly, monomer. The cofactor is [4Fe-4S] cluster.

The protein resides in the cytoplasm. The enzyme catalyses N(6)-dimethylallyladenosine(37) in tRNA + (sulfur carrier)-SH + AH2 + 2 S-adenosyl-L-methionine = 2-methylsulfanyl-N(6)-dimethylallyladenosine(37) in tRNA + (sulfur carrier)-H + 5'-deoxyadenosine + L-methionine + A + S-adenosyl-L-homocysteine + 2 H(+). In terms of biological role, catalyzes the methylthiolation of N6-(dimethylallyl)adenosine (i(6)A), leading to the formation of 2-methylthio-N6-(dimethylallyl)adenosine (ms(2)i(6)A) at position 37 in tRNAs that read codons beginning with uridine. The polypeptide is tRNA-2-methylthio-N(6)-dimethylallyladenosine synthase (Bradyrhizobium sp. (strain ORS 278)).